Reading from the N-terminus, the 453-residue chain is Alpha-2B adrenergic receptor (453 aa).

The Extracellular segment spans residues 1-17 (MSGPTMDHQEPYSVQAT). Residues 18–42 (AAIASAITFLILFTIFGNALVILAV) traverse the membrane as a helical segment. The Cytoplasmic portion of the chain corresponds to 43–54 (LTSRSLRAPQNL). Residues 55 to 80 (FLVSLAAADILVATLIIPFSLANELL) form a helical membrane-spanning segment. Residues 81-90 (GYWYFWRAWC) are Extracellular-facing. Residues cysteine 90 and cysteine 169 are joined by a disulfide bond. The chain crosses the membrane as a helical span at residues 91–113 (EVYLALDVLFCTSSIVHLCAISL). The Cytoplasmic portion of the chain corresponds to 114–135 (DRYWAVSRALEYNSKRTPRRIK). The chain crosses the membrane as a helical span at residues 136-158 (CIILTVWLIAAVISLPPLIYKGD). Over 159 to 174 (QRPEPRGLPQCELNQE) the chain is Extracellular. A helical transmembrane segment spans residues 175-198 (AWYILASSIGSFFAPCLIMILVYL). The Cytoplasmic segment spans residues 199–375 (RIYVIAKRSH…LSREKRFTFV (177 aa)). The disordered stretch occupies residues 213 to 331 (GAKRGSGEGE…PASVCNPPLQ (119 aa)). The span at 287-297 (GQGQKKGTSGA) shows a compositional bias: polar residues. Residues 300–314 (EEGDEEDEEEVEECE) show a composition bias toward acidic residues. A helical transmembrane segment spans residues 376 to 399 (LAVVIGVFVVCWFPFFFSYSLGAI). Residues 400–408 (CPQHCKVPH) are Extracellular-facing. A helical membrane pass occupies residues 409 to 432 (GLFQFFFWIGYCNSSLNPVIYTVF). At 433–453 (NQDFRRAFRRILCRPWTQTGW) the chain is on the cytoplasmic side. Residue cysteine 445 is the site of S-palmitoyl cysteine attachment.

This sequence belongs to the G-protein coupled receptor 1 family. Adrenergic receptor subfamily. ADRA2B sub-subfamily. Interacts with RAB26. Interacts with PPP1R9B. Interacts with GGA1, GGA2 and GGA3.

Its subcellular location is the cell membrane. In terms of biological role, alpha-2 adrenergic receptors mediate the catecholamine-induced inhibition of adenylate cyclase through the action of G proteins. The polypeptide is Alpha-2B adrenergic receptor (Adra2b) (Rattus norvegicus (Rat)).